Reading from the N-terminus, the 326-residue chain is Pyruvate dehydrogenase E1 component subunit alpha (326 aa).

Heterodimer of an alpha and a beta chain. Thiamine diphosphate serves as cofactor.

It carries out the reaction N(6)-[(R)-lipoyl]-L-lysyl-[protein] + pyruvate + H(+) = N(6)-[(R)-S(8)-acetyldihydrolipoyl]-L-lysyl-[protein] + CO2. The pyruvate dehydrogenase complex catalyzes the overall conversion of pyruvate to acetyl-CoA and CO(2). It contains multiple copies of three enzymatic components: pyruvate dehydrogenase (E1), dihydrolipoamide acetyltransferase (E2) and lipoamide dehydrogenase (E3). The sequence is that of Pyruvate dehydrogenase E1 component subunit alpha (pdhA) from Rickettsia typhi (strain ATCC VR-144 / Wilmington).